The chain runs to 290 residues: tRNA dimethylallyltransferase (290 aa).

9 to 16 (GPTASGKT) provides a ligand contact to ATP. 11–16 (TASGKT) serves as a coordination point for substrate. Residues 34–37 (DSTQ) form an interaction with substrate tRNA region.

The protein belongs to the IPP transferase family. In terms of assembly, monomer. The cofactor is Mg(2+).

It carries out the reaction adenosine(37) in tRNA + dimethylallyl diphosphate = N(6)-dimethylallyladenosine(37) in tRNA + diphosphate. In terms of biological role, catalyzes the transfer of a dimethylallyl group onto the adenine at position 37 in tRNAs that read codons beginning with uridine, leading to the formation of N6-(dimethylallyl)adenosine (i(6)A). This chain is tRNA dimethylallyltransferase, found in Phytoplasma australiense.